The primary structure comprises 242 residues: Platinum sensitivity protein 3 (242 aa).

As to quaternary structure, component of the SHU complex composed of at least CSM2, PSY3, SHU1 and SHU2.

It localises to the nucleus. In terms of biological role, required for resistance to the DNA-damaging agents methyl methanesulfonate (MMS), cisplatin and oxaliplatin, but not to mitomycin C. Plays a role in protection against mutation accumulation. May be a component of the recombination-repair pathway. This Saccharomyces cerevisiae (strain ATCC 204508 / S288c) (Baker's yeast) protein is Platinum sensitivity protein 3 (PSY3).